The primary structure comprises 211 residues: Large ribosomal subunit protein uL3 (211 aa).

Belongs to the universal ribosomal protein uL3 family. Part of the 50S ribosomal subunit. Forms a cluster with proteins L14 and L19.

Functionally, one of the primary rRNA binding proteins, it binds directly near the 3'-end of the 23S rRNA, where it nucleates assembly of the 50S subunit. The polypeptide is Large ribosomal subunit protein uL3 (Trichlorobacter lovleyi (strain ATCC BAA-1151 / DSM 17278 / SZ) (Geobacter lovleyi)).